Reading from the N-terminus, the 182-residue chain is Thymidine kinase (182 aa).

8–15 (GPMFSGKT) is an ATP binding site. Glutamate 85 functions as the Proton acceptor in the catalytic mechanism. Residue phenylalanine 117 participates in substrate binding. Zn(2+)-binding residues include cysteine 142 and cysteine 145. 161–165 (IIEIG) provides a ligand contact to substrate. Zn(2+) contacts are provided by cysteine 174 and cysteine 177.

It belongs to the thymidine kinase family.

The enzyme catalyses thymidine + ATP = dTMP + ADP + H(+). The chain is Thymidine kinase (TK) from Amsacta moorei entomopoxvirus (AmEPV).